The primary structure comprises 508 residues: ATP synthase subunit alpha (508 aa).

169 to 176 (GDRQTGKT) serves as a coordination point for ATP.

The protein belongs to the ATPase alpha/beta chains family. F-type ATPases have 2 components, CF(1) - the catalytic core - and CF(0) - the membrane proton channel. CF(1) has five subunits: alpha(3), beta(3), gamma(1), delta(1), epsilon(1). CF(0) has three main subunits: a(1), b(2) and c(9-12). The alpha and beta chains form an alternating ring which encloses part of the gamma chain. CF(1) is attached to CF(0) by a central stalk formed by the gamma and epsilon chains, while a peripheral stalk is formed by the delta and b chains.

Its subcellular location is the cell inner membrane. The catalysed reaction is ATP + H2O + 4 H(+)(in) = ADP + phosphate + 5 H(+)(out). Functionally, produces ATP from ADP in the presence of a proton gradient across the membrane. The alpha chain is a regulatory subunit. The polypeptide is ATP synthase subunit alpha (Allorhizobium ampelinum (strain ATCC BAA-846 / DSM 112012 / S4) (Agrobacterium vitis (strain S4))).